A 340-amino-acid chain; its full sequence is NADH-quinone oxidoreductase subunit H (340 aa).

8 helical membrane passes run 4 to 24, 78 to 98, 113 to 133, 151 to 171, 184 to 204, 244 to 264, 273 to 293, and 316 to 336; these read TIGILIWIIIKILVIVVPLLI, YLFVIAPLFALVPSLVGWAVI, VLYLFAMSSLGVYGVLIAGWA, VSYEIAMGFALVGVLLAAGSM, MLHWWFIPLLPLFLVFWIAGI, SMILISTFMAILFMGGWLSPF, IFFVVPGFVWLLLKISFFLFV, and VLIPVTIVWLIVTSLMVVAHV.

This sequence belongs to the complex I subunit 1 family. In terms of assembly, NDH-1 is composed of 14 different subunits. Subunits NuoA, H, J, K, L, M, N constitute the membrane sector of the complex.

It localises to the cell inner membrane. The enzyme catalyses a quinone + NADH + 5 H(+)(in) = a quinol + NAD(+) + 4 H(+)(out). In terms of biological role, NDH-1 shuttles electrons from NADH, via FMN and iron-sulfur (Fe-S) centers, to quinones in the respiratory chain. The immediate electron acceptor for the enzyme in this species is believed to be ubiquinone. Couples the redox reaction to proton translocation (for every two electrons transferred, four hydrogen ions are translocated across the cytoplasmic membrane), and thus conserves the redox energy in a proton gradient. This subunit may bind ubiquinone. The sequence is that of NADH-quinone oxidoreductase subunit H from Legionella pneumophila (strain Corby).